A 599-amino-acid chain; its full sequence is Elongation factor 4 (599 aa).

The tr-type G domain occupies 4–186; sequence EHIRNFSIIA…EIVKKIPPPK (183 aa). GTP contacts are provided by residues 16–21 and 133–136; these read DHGKST and NKID.

This sequence belongs to the TRAFAC class translation factor GTPase superfamily. Classic translation factor GTPase family. LepA subfamily.

Its subcellular location is the cell inner membrane. The catalysed reaction is GTP + H2O = GDP + phosphate + H(+). Required for accurate and efficient protein synthesis under certain stress conditions. May act as a fidelity factor of the translation reaction, by catalyzing a one-codon backward translocation of tRNAs on improperly translocated ribosomes. Back-translocation proceeds from a post-translocation (POST) complex to a pre-translocation (PRE) complex, thus giving elongation factor G a second chance to translocate the tRNAs correctly. Binds to ribosomes in a GTP-dependent manner. This is Elongation factor 4 from Citrifermentans bemidjiense (strain ATCC BAA-1014 / DSM 16622 / JCM 12645 / Bem) (Geobacter bemidjiensis).